The following is a 179-amino-acid chain: Interleukin-22 (179 aa).

A signal peptide spans 1–33 (MAALQKSVSSFLMGTLATSCLLLLALLVQGGAA). 2 disulfide bridges follow: Cys40/Cys132 and Cys89/Cys178. Residues Asn54, Asn68, and Asn97 are each glycosylated (N-linked (GlcNAc...) asparagine).

It belongs to the IL-10 family.

The protein resides in the secreted. Functionally, cytokine that plays a critical role in modulating tissue responses during inflammation. Plays an essential role in the regeneration of epithelial cells to maintain barrier function after injury and for the prevention of further tissue damage. Unlike most of the cytokines, has no effect on immune cells. Signals through a heterodimeric receptor composed of two subunits, the specific receptor IL22RA1 which is present on non-immune cells in many organs and the shared subunit IL10RB. Ligation of IL22RA1 with IL22 induces activation of the tyrosine kinases JAK1 and TYK2, which in turn activates STAT3. In turn, promotes cell survival and proliferation through STAT3, ERK1/2 and PI3K/AKT pathways. Promotes phosphorylation of GSK3B at 'Ser-9' and CTTN. Promotes epithelial cell spreading. This is Interleukin-22 (IL22) from Homo sapiens (Human).